Consider the following 424-residue polypeptide: Inhibin beta A chain (424 aa).

A signal peptide spans Met-1–Ser-20. Positions Ser-21 to Arg-308 are excised as a propeptide. An N-linked (GlcNAc...) asparagine glycan is attached at Asn-165. Disordered regions lie at residues Gln-178–Glu-200 and Lys-260–Arg-288. Positions Lys-263–Gly-275 are enriched in basic and acidic residues. Intrachain disulfides connect Cys-312-Cys-320, Cys-319-Cys-389, Cys-348-Cys-421, and Cys-352-Cys-423.

It belongs to the TGF-beta family. As to quaternary structure, dimeric, linked by one or more disulfide bonds. Inhibin A is a dimer of alpha and beta-A. Inhibin B is a dimer of alpha and beta-B. Activin A is a homodimer of beta-A. Activin B is a homodimer of beta-B. Activin AB is a dimer of beta-A and beta-B. In terms of tissue distribution, ciliary ganglion neurons. Levels are higher in the choroid than the iris.

It localises to the secreted. In terms of biological role, inhibins and activins inhibit and activate, respectively, the secretion of follitropin by the pituitary gland. Inhibins/activins are involved in regulating a number of diverse functions such as hypothalamic and pituitary hormone secretion, gonadal hormone secretion, germ cell development and maturation, erythroid differentiation, insulin secretion, nerve cell survival, embryonic axial development or bone growth, depending on their subunit composition. Inhibins appear to oppose the functions of activins. Induces somatostatin in the ciliary ganglion neurons and may play a role in regulating neurotransmitter phenotype. The polypeptide is Inhibin beta A chain (INHBA) (Gallus gallus (Chicken)).